The chain runs to 308 residues: 4-hydroxy-3-methylbut-2-enyl diphosphate reductase (308 aa).

Cys-13 is a binding site for [4Fe-4S] cluster. His-42 and His-75 together coordinate (2E)-4-hydroxy-3-methylbut-2-enyl diphosphate. Dimethylallyl diphosphate contacts are provided by His-42 and His-75. 2 residues coordinate isopentenyl diphosphate: His-42 and His-75. Position 97 (Cys-97) interacts with [4Fe-4S] cluster. His-125 is a (2E)-4-hydroxy-3-methylbut-2-enyl diphosphate binding site. His-125 is a dimethylallyl diphosphate binding site. His-125 is an isopentenyl diphosphate binding site. The active-site Proton donor is Glu-127. Thr-165 contacts (2E)-4-hydroxy-3-methylbut-2-enyl diphosphate. Residue Cys-195 participates in [4Fe-4S] cluster binding. (2E)-4-hydroxy-3-methylbut-2-enyl diphosphate contacts are provided by Ser-223, Ser-224, Asn-225, and Ser-267. Positions 223, 224, 225, and 267 each coordinate dimethylallyl diphosphate. Residues Ser-223, Ser-224, Asn-225, and Ser-267 each contribute to the isopentenyl diphosphate site.

This sequence belongs to the IspH family. The cofactor is [4Fe-4S] cluster.

The catalysed reaction is isopentenyl diphosphate + 2 oxidized [2Fe-2S]-[ferredoxin] + H2O = (2E)-4-hydroxy-3-methylbut-2-enyl diphosphate + 2 reduced [2Fe-2S]-[ferredoxin] + 2 H(+). The enzyme catalyses dimethylallyl diphosphate + 2 oxidized [2Fe-2S]-[ferredoxin] + H2O = (2E)-4-hydroxy-3-methylbut-2-enyl diphosphate + 2 reduced [2Fe-2S]-[ferredoxin] + 2 H(+). It participates in isoprenoid biosynthesis; dimethylallyl diphosphate biosynthesis; dimethylallyl diphosphate from (2E)-4-hydroxy-3-methylbutenyl diphosphate: step 1/1. Its pathway is isoprenoid biosynthesis; isopentenyl diphosphate biosynthesis via DXP pathway; isopentenyl diphosphate from 1-deoxy-D-xylulose 5-phosphate: step 6/6. Its function is as follows. Catalyzes the conversion of 1-hydroxy-2-methyl-2-(E)-butenyl 4-diphosphate (HMBPP) into a mixture of isopentenyl diphosphate (IPP) and dimethylallyl diphosphate (DMAPP). Acts in the terminal step of the DOXP/MEP pathway for isoprenoid precursor biosynthesis. This Chlamydia muridarum (strain MoPn / Nigg) protein is 4-hydroxy-3-methylbut-2-enyl diphosphate reductase.